A 301-amino-acid polypeptide reads, in one-letter code: Ornithine carbamoyltransferase (301 aa).

Residues Ser-47–Thr-50, Gln-74, Arg-98, and His-125–Gln-128 contribute to the carbamoyl phosphate site. L-ornithine contacts are provided by residues Asn-156, Asp-220, and Ser-224 to Met-225. Residues Cys-260 to Leu-261 and Arg-288 contribute to the carbamoyl phosphate site.

It belongs to the aspartate/ornithine carbamoyltransferase superfamily. OTCase family.

Its subcellular location is the cytoplasm. It carries out the reaction carbamoyl phosphate + L-ornithine = L-citrulline + phosphate + H(+). Its pathway is amino-acid biosynthesis; L-arginine biosynthesis; L-arginine from L-ornithine and carbamoyl phosphate: step 1/3. In terms of biological role, reversibly catalyzes the transfer of the carbamoyl group from carbamoyl phosphate (CP) to the N(epsilon) atom of ornithine (ORN) to produce L-citrulline. This is Ornithine carbamoyltransferase from Picrophilus torridus (strain ATCC 700027 / DSM 9790 / JCM 10055 / NBRC 100828 / KAW 2/3).